The primary structure comprises 129 residues: MAKLSTEELLDAFAELTLLELSEFVKAFEEKFEVTAAAPVAVAAVGGAAPAAADAAEEQSEFDVILESAGDKKIGVIKVVREIVSGLGLKEAKDLVDGAPKPLLEKVAKEAADDAKAKLEAAGATVTVK.

Belongs to the bacterial ribosomal protein bL12 family. In terms of assembly, homodimer. Part of the ribosomal stalk of the 50S ribosomal subunit. Forms a multimeric L10(L12)X complex, where L10 forms an elongated spine to which 2 to 4 L12 dimers bind in a sequential fashion. Binds GTP-bound translation factors.

Its function is as follows. Forms part of the ribosomal stalk which helps the ribosome interact with GTP-bound translation factors. Is thus essential for accurate translation. The protein is Large ribosomal subunit protein bL12 of Mycobacteroides abscessus (strain ATCC 19977 / DSM 44196 / CCUG 20993 / CIP 104536 / JCM 13569 / NCTC 13031 / TMC 1543 / L948) (Mycobacterium abscessus).